The following is a 562-amino-acid chain: Eukaryotic translation initiation factor 3 subunit L (562 aa).

The tract at residues 1 to 29 (MSHAKEDYDSSYDPYSYQADYDGHTGDPK) is disordered. The segment covering 11-20 (SYDPYSYQAD) has biased composition (low complexity). In terms of domain architecture, PCI spans 329–535 (DSIRVFANIL…IHIADTKVAR (207 aa)).

The protein belongs to the eIF-3 subunit L family. Component of the eukaryotic translation initiation factor 3 (eIF-3) complex, which is composed of 13 subunits: eif3a, eif3b, eif3c, eif3d, eif3e, eif3f, eif3g, eif3h, eif3i, eif3j, eif3k, eif3l and eif3m.

The protein localises to the cytoplasm. In terms of biological role, component of the eukaryotic translation initiation factor 3 (eIF-3) complex, which is involved in protein synthesis of a specialized repertoire of mRNAs and, together with other initiation factors, stimulates binding of mRNA and methionyl-tRNAi to the 40S ribosome. The eIF-3 complex specifically targets and initiates translation of a subset of mRNAs involved in cell proliferation. The polypeptide is Eukaryotic translation initiation factor 3 subunit L (eif3l) (Xenopus laevis (African clawed frog)).